A 312-amino-acid polypeptide reads, in one-letter code: ADP-L-glycero-D-manno-heptose-6-epimerase (312 aa).

NADP(+) is bound by residues 10-11 (FI), 31-32 (DN), K38, K53, 75-79 (EGACS), and N92. The active-site Proton acceptor is the Y140. An NADP(+)-binding site is contributed by K144. A substrate-binding site is contributed by N169. NADP(+)-binding residues include V170 and K178. The active-site Proton acceptor is K178. Substrate is bound by residues S180, H187, 201-204 (FEGS), R209, and Y274.

This sequence belongs to the NAD(P)-dependent epimerase/dehydratase family. HldD subfamily. Homopentamer. NADP(+) serves as cofactor.

The enzyme catalyses ADP-D-glycero-beta-D-manno-heptose = ADP-L-glycero-beta-D-manno-heptose. It participates in nucleotide-sugar biosynthesis; ADP-L-glycero-beta-D-manno-heptose biosynthesis; ADP-L-glycero-beta-D-manno-heptose from D-glycero-beta-D-manno-heptose 7-phosphate: step 4/4. Functionally, catalyzes the interconversion between ADP-D-glycero-beta-D-manno-heptose and ADP-L-glycero-beta-D-manno-heptose via an epimerization at carbon 6 of the heptose. This chain is ADP-L-glycero-D-manno-heptose-6-epimerase, found in Proteus mirabilis (strain HI4320).